Consider the following 151-residue polypeptide: Phosphoribosyl-AMP cyclohydrolase (151 aa).

Residue D94 coordinates Mg(2+). C95 contributes to the Zn(2+) binding site. Mg(2+) is bound by residues D96 and D98. Zn(2+)-binding residues include C112 and C119.

This sequence belongs to the PRA-CH family. As to quaternary structure, homodimer. Mg(2+) serves as cofactor. Zn(2+) is required as a cofactor.

The protein localises to the cytoplasm. The catalysed reaction is 1-(5-phospho-beta-D-ribosyl)-5'-AMP + H2O = 1-(5-phospho-beta-D-ribosyl)-5-[(5-phospho-beta-D-ribosylamino)methylideneamino]imidazole-4-carboxamide. It functions in the pathway amino-acid biosynthesis; L-histidine biosynthesis; L-histidine from 5-phospho-alpha-D-ribose 1-diphosphate: step 3/9. Functionally, catalyzes the hydrolysis of the adenine ring of phosphoribosyl-AMP. The polypeptide is Phosphoribosyl-AMP cyclohydrolase (Rhodopseudomonas palustris (strain ATCC BAA-98 / CGA009)).